Here is a 149-residue protein sequence, read N- to C-terminus: ATP synthase epsilon chain (149 aa).

2 stretches are compositionally biased toward basic and acidic residues: residues 99–116 (DVER…RLEE) and 123–134 (RETHEAARDRAR). The disordered stretch occupies residues 99–149 (DVERAESAEERAKRRLEEGVQEEERETHEAARDRARNRLRVAMGKVGTRQS).

Belongs to the ATPase epsilon chain family. In terms of assembly, F-type ATPases have 2 components, CF(1) - the catalytic core - and CF(0) - the membrane proton channel. CF(1) has five subunits: alpha(3), beta(3), gamma(1), delta(1), epsilon(1). CF(0) has three main subunits: a, b and c.

It localises to the cell inner membrane. Its function is as follows. Produces ATP from ADP in the presence of a proton gradient across the membrane. The protein is ATP synthase epsilon chain of Salinibacter ruber (strain DSM 13855 / M31).